The primary structure comprises 369 residues: Opsin Rh6 (369 aa).

At 1-46 (MASLHPPSFAYMRDGRNLSLAESVPAEIMHMVDPYWYQWPPLEPMW) the chain is on the extracellular side. Residue Asn-17 is glycosylated (N-linked (GlcNAc...) asparagine). A helical transmembrane segment spans residues 47-71 (FGIIGFVIAILGTMSLAGNFIVMYI). Residues 72 to 83 (FTSSKGLRTPSN) lie on the Cytoplasmic side of the membrane. Residues 84–109 (MFVVNLAFSDFMMMFTMFPPVVLNGF) traverse the membrane as a helical segment. Residues 110–123 (YGTWIMGPFLCELY) lie on the Extracellular side of the membrane. An intrachain disulfide couples Cys-120 to Cys-197. A helical transmembrane segment spans residues 124 to 143 (GMFGSLFGCVSIWSMTLIAY). Topologically, residues 144–162 (DRYCVIVKGMARKPLTATA) are cytoplasmic. The chain crosses the membrane as a helical span at residues 163–186 (AVLRLMVVWTICGAWALMPLFGWN). The Extracellular segment spans residues 187-210 (RYVPEGNMTACGTDYFAKDWWNRS). Residues Asn-193 and Asn-208 are each glycosylated (N-linked (GlcNAc...) asparagine). A helical membrane pass occupies residues 211-238 (YIIVYSLWVYLTPLLTIIFSYWHIMKAV). The Cytoplasmic portion of the chain corresponds to 239-274 (AAHEKAMREQAKKMNVASLRNSEADKSKAIEIKLAK). The helical transmembrane segment at 275-298 (VALTTISLWFFAWTPYTIINYAGI) threads the bilayer. At 299-305 (FESMHLS) the chain is on the extracellular side. The helical transmembrane segment at 306–330 (PLSTICGSVFAKANAVCNPIVYGLS) threads the bilayer. Lys-317 carries the post-translational modification N6-(retinylidene)lysine. Residues 331 to 369 (HPKYKQVLREKMPCLACGKDDLTSDSRTQATAEISESQA) are Cytoplasmic-facing.

This sequence belongs to the G-protein coupled receptor 1 family. Opsin subfamily. In terms of processing, phosphorylated on some or all of the serine and threonine residues present in the C-terminal region. In terms of tissue distribution, each Drosophila eye is composed of 800 facets or ommatidia. Each ommatidium contains 8 photoreceptor cells (R1-R8), the R1 to R6 cells are outer cells, while R7 and R8 are inner cells. Rh6 is expressed in a subset of R8 cells, most likely expressed in the subset of R8 cells paired with Rh4-expressing R7 cells (R7y).

Its subcellular location is the membrane. Its function is as follows. Visual pigments are the light-absorbing molecules that mediate vision. They consist of an apoprotein, opsin, covalently linked to cis-retinal. In Drosophila melanogaster (Fruit fly), this protein is Opsin Rh6 (Rh6).